Reading from the N-terminus, the 194-residue chain is Ras-related protein Rab-22A (194 aa).

GTP is bound at residue 12–20; that stretch reads GDTGVGKSS. Positions 34-42 match the Effector region motif; the sequence is INPTIGASF. GTP-binding positions include 60–64, 118–121, and 148–150; these read DTAGQ, NKCD, and SAK. The interval 170-194 is disordered; sequence DANPASGGKGFKLRRQPSEPKRSCC. The span at 185–194 shows a compositional bias: basic and acidic residues; the sequence is QPSEPKRSCC. S-geranylgeranyl cysteine attachment occurs at residues C193 and C194.

It belongs to the small GTPase superfamily. Rab family. Binds EEA1. Interacts (in its GTP-bound form) with RINL. Interacts directly with ZFYVE20. Interacts (in its GTP-bound form) with RABGEF1. Detected in brain and heart, and at lower levels in lung and spleen.

The protein localises to the endosome membrane. Its subcellular location is the cell membrane. It is found in the early endosome. The protein resides in the late endosome. It localises to the cell projection. The protein localises to the ruffle. Its subcellular location is the cytoplasmic vesicle. It is found in the phagosome. The protein resides in the phagosome membrane. In terms of biological role, plays a role in endocytosis and intracellular protein transport. Mediates trafficking of TF from early endosomes to recycling endosomes. Required for NGF-mediated endocytosis of NTRK1, and subsequent neurite outgrowth. Binds GTP and GDP and has low GTPase activity. Alternates between a GTP-bound active form and a GDP-bound inactive form. The protein is Ras-related protein Rab-22A (Rab22a) of Mus musculus (Mouse).